A 276-amino-acid polypeptide reads, in one-letter code: Rhomboid protease GlpG (276 aa).

The next 6 helical transmembrane spans lie at 94 to 114 (GPFTWAILLICIAVFILQNLL), 142 to 162 (AFMHFSLMHILFNLLWWWYLG), 169 to 189 (IGSGKLVVITVISALLSGFVQ), 192 to 212 (FSGPWFGGLSGVVYALMGYVW), 229 to 249 (LILFSLVWLIAGWFDVFGMAI), and 252 to 272 (GAHVAGLATGLAMAFVDTLHG). The active-site Nucleophile is the Ser201. The active site involves His254.

It belongs to the peptidase S54 family.

Its subcellular location is the cell inner membrane. The enzyme catalyses Cleaves type-1 transmembrane domains using a catalytic dyad composed of serine and histidine that are contributed by different transmembrane domains.. In terms of biological role, rhomboid-type serine protease that catalyzes intramembrane proteolysis. The protein is Rhomboid protease GlpG of Klebsiella pneumoniae (strain 342).